Here is a 152-residue protein sequence, read N- to C-terminus: Ribosome maturation factor RimP (152 aa).

It belongs to the RimP family.

The protein resides in the cytoplasm. Required for maturation of 30S ribosomal subunits. In Burkholderia cenocepacia (strain ATCC BAA-245 / DSM 16553 / LMG 16656 / NCTC 13227 / J2315 / CF5610) (Burkholderia cepacia (strain J2315)), this protein is Ribosome maturation factor RimP.